Reading from the N-terminus, the 977-residue chain is Collagen alpha-2(I) chain (977 aa).

Positions 1–977 are disordered; that stretch reads SGGFDFSFLP…RGSQGSQGPS (977 aa). Residues Pro10, Pro13, Pro28, and Pro34 each carry the 4-hydroxyproline modification. The span at 17-66 shows a compositional bias: low complexity; it reads GPMGLMGPRGPPGASGAPGPQGFQGPAGEPGEPGQTGPAGARGPAGPPGK. Residue Lys91 is modified to 5-hydroxylysine; alternate. An O-linked (Gal...) hydroxylysine; alternate glycan is attached at Lys91. Composition is skewed to low complexity over residues 138–159 and 205–226; these read SRGS…SAGP and PGAN…AGAP. The span at 258 to 267 shows a compositional bias: gly residues; that stretch reads GESGGKGEPG. The span at 268–278 shows a compositional bias: low complexity; it reads SAGPQGPPGSS. Gly residues predominate over residues 300–309; sequence GLRGGPGSRG. The span at 322 to 338 shows a compositional bias: low complexity; sequence PAGARGASGPAGVRGPS. 4-hydroxyproline occurs at positions 344 and 347. The span at 373–392 shows a compositional bias: low complexity; that stretch reads LPGIDGRPGPIGPAGARGEA. A compositionally biased stretch (gly residues) spans 441 to 450; the sequence is GVQGGKGEQG. Composition is skewed to low complexity over residues 497–514 and 526–536; these read SGES…SRGP and EPGVVGAPGTA. Positions 537-546 are enriched in gly residues; that stretch reads GPAGSGGLPG. Low complexity-rich tracts occupy residues 569-605 and 620-640; these read VGTT…AGPA and VGPA…QPGA. Basic and acidic residues predominate over residues 641–650; the sequence is KGERGTKGPK. The segment covering 658–668 has biased composition (low complexity); sequence PTGPVGSAGPA. Residues 678 to 687 show a composition bias toward gly residues; the sequence is GSRGDGGPPG. Residues 689-698 are compositionally biased toward low complexity; sequence TGFPGAAGRT. A compositionally biased stretch (gly residues) spans 735-744; it reads GETGAGGPPG. Low complexity-rich tracts occupy residues 752 to 779 and 787 to 797; these read SGEP…LGLP and LPGVAGAVGEP. The span at 798–817 shows a compositional bias: gly residues; it reads GPLGIGPPGARGPSGAGVNG. Low complexity-rich tracts occupy residues 853–871 and 878–898; these read PVGA…PAGK and PGPA…PSGP. The span at 902–913 shows a compositional bias: basic and acidic residues; sequence RGDKGEAGDKGP.

Belongs to the fibrillar collagen family. As to quaternary structure, trimers of one alpha 2(I) and two alpha 1(I) chains. Interacts (via C-terminus) with TMEM131 (via PapD-L domain); the interaction is direct and is involved in assembly and TRAPPIII ER-to-Golgi transport complex-dependent secretion of collagen. Prolines at the third position of the tripeptide repeating unit (G-X-Y) are hydroxylated in some or all of the chains. As to expression, expressed in bones.

It is found in the secreted. The protein resides in the extracellular space. The protein localises to the extracellular matrix. In terms of biological role, type I collagen is a member of group I collagen (fibrillar forming collagen). This Scelidodon sp. (strain SLP-2019) (South American ground sloth) protein is Collagen alpha-2(I) chain.